A 186-amino-acid chain; its full sequence is MYIIAGLGNPGKEYMGTRHNAGFSVIDELADKYNISVDTAKHKGLIGKGVIAGQKVILVKPMTYMNNSGECIREVMDYYKCDIDDFLVIFDDISLDVGKLRLRAKGSAGGHNGIKSIIAHLGSDKFKRIKFGVGDKPKNWDLADWVLGKFPAEEYATLREANKKACEAVECILTDGIESGMNKYNG.

Tyr14 serves as a coordination point for tRNA. The active-site Proton acceptor is His19. TRNA contacts are provided by Tyr64, Asn66, and Asn112.

Belongs to the PTH family. As to quaternary structure, monomer.

It is found in the cytoplasm. The catalysed reaction is an N-acyl-L-alpha-aminoacyl-tRNA + H2O = an N-acyl-L-amino acid + a tRNA + H(+). Functionally, hydrolyzes ribosome-free peptidyl-tRNAs (with 1 or more amino acids incorporated), which drop off the ribosome during protein synthesis, or as a result of ribosome stalling. In terms of biological role, catalyzes the release of premature peptidyl moieties from peptidyl-tRNA molecules trapped in stalled 50S ribosomal subunits, and thus maintains levels of free tRNAs and 50S ribosomes. This Lachnospira eligens (strain ATCC 27750 / DSM 3376 / VPI C15-48 / C15-B4) (Eubacterium eligens) protein is Peptidyl-tRNA hydrolase.